Reading from the N-terminus, the 199-residue chain is Phosphatidylethanolamine N-methyltransferase (199 aa).

Residues 2 to 12 (SWLLGYVDPTE) lie on the Lumenal side of the membrane. Positions 13-33 (PSFVAAVLTIVFNPLFWNVVA) form an intramembrane region, helical. At 34–45 (RWEQRTRKLSRA) the chain is on the lumenal side. The helical transmembrane segment at 46 to 66 (FGSPYLACYSLGSIILLLNIL) threads the bilayer. Topologically, residues 67-93 (RSHCFTQAMMSQPKMEGLDSHTIYFLG) are cytoplasmic. Residues 94–114 (LALLGWGLVFVLSSFYALGFT) traverse the membrane as a helical segment. 98–100 (GWG) contacts S-adenosyl-L-methionine. The Lumenal portion of the chain corresponds to 115-157 (GTFLGDYFGILKESRVTTFPFSVLDNPMYWGSTANYLGWALMH). A helical membrane pass occupies residues 158 to 178 (ASPTGLLLTVLVALVYVVALL). The Cytoplasmic segment spans residues 179–199 (FEEPFTAEIYRRKATRLHKRS). Position 180–181 (180–181 (EE)) interacts with S-adenosyl-L-methionine.

The protein belongs to the class VI-like SAM-binding methyltransferase superfamily. PEMT/PEM2 methyltransferase family. In terms of tissue distribution, expressed in liver (at protein level).

It is found in the endoplasmic reticulum membrane. It localises to the mitochondrion membrane. The enzyme catalyses a 1,2-diacyl-sn-glycero-3-phosphoethanolamine + S-adenosyl-L-methionine = a 1,2-diacyl-sn-glycero-3-phospho-N-methylethanolamine + S-adenosyl-L-homocysteine + H(+). It catalyses the reaction a 1,2-diacyl-sn-glycero-3-phospho-N-methylethanolamine + S-adenosyl-L-methionine = a 1,2-diacyl-sn-glycero-3-phospho-N,N-dimethylethanolamine + S-adenosyl-L-homocysteine + H(+). It carries out the reaction a 1,2-diacyl-sn-glycero-3-phospho-N,N-dimethylethanolamine + S-adenosyl-L-methionine = a 1,2-diacyl-sn-glycero-3-phosphocholine + S-adenosyl-L-homocysteine + H(+). The catalysed reaction is 1,2-di-(9Z-octadecenoyl)-sn-glycero-3-phosphoethanolamine + S-adenosyl-L-methionine = 1,2-di-(9Z-octadecenoyl)-sn-glycero-3-phospho-N-methylethanolamine + S-adenosyl-L-homocysteine + H(+). The enzyme catalyses 1,2-di-(9Z-octadecenoyl)-sn-glycero-3-phospho-N-methylethanolamine + S-adenosyl-L-methionine = 1,2-di-(9Z-octadecenoyl)-sn-glycero-3-phospho-N,N-dimethylethanolamine + S-adenosyl-L-homocysteine + H(+). It catalyses the reaction 1,2-di-(9Z-octadecenoyl)-sn-glycero-3-phospho-N,N-dimethylethanolamine + S-adenosyl-L-methionine = 1,2-di-(9Z-octadecenoyl)-sn-glycero-3-phosphocholine + S-adenosyl-L-homocysteine + H(+). It carries out the reaction 1,2-di-(9Z,12Z-octadecadienoyl)-sn-glycero-3-phosphoethanolamine + S-adenosyl-L-methionine = 1,2-di-(9Z,12Z-octadecadienoyl)-sn-glycero-3-phospho-N-methylethanolamine + S-adenosyl-L-homocysteine + H(+). The catalysed reaction is 1,2-di-(9Z,12Z-octadecadienoyl)-sn-glycero-3-phospho-N-methylethanolamine + S-adenosyl-L-methionine = 1,2-di-(9Z,12Z-octadecadienoyl)-sn-glycero-3-phospho-N,N-dimethylethanolamine + S-adenosyl-L-homocysteine + H(+). The enzyme catalyses 1,2-di-(9Z,12Z-octadecadienoyl)-sn-glycero-3-phospho-N,N-dimethylethanolamine + S-adenosyl-L-methionine = 1,2-di-(9Z,12Z-octadecadienoyl)-sn-glycero-3-phosphocholine + S-adenosyl-L-homocysteine + H(+). It catalyses the reaction 1,2-di-(9Z,12Z,15Z-octadecatrienoyl)-sn-glycero-3-phosphoethanolamine + S-adenosyl-L-methionine = 1,2-di-(9Z,12Z,15Z-octadecatrienoyl)-sn-glycero-3-phospho-N-methylethanolamine + S-adenosyl-L-homocysteine + H(+). It carries out the reaction 1,2-di-(9Z,12Z,15Z-octadecatrienoyl)-sn-glycero-3-phospho-N-methylethanolamine + S-adenosyl-L-methionine = 1,2-di-(9Z,12Z,15Z-octadecatrienoyl)-sn-glycero-3-phospho-N,N-dimethylethanolamine + S-adenosyl-L-homocysteine + H(+). The catalysed reaction is 1,2-di-(9Z,12Z,15Z-octadecatrienoyl)-sn-glycero-3-phospho-N,N-dimethylethanolamine + S-adenosyl-L-methionine = 1,2-di-(9Z,12Z,15Z-octadecatrienoyl)-sn-glycero-3-phosphocholine + S-adenosyl-L-homocysteine + H(+). The enzyme catalyses 1-hexadecanoyl-2-(4Z,7Z,10Z,13Z,16Z,19Z-docosahexaenoyl)-sn-glycero-3-phosphoethanolamine + S-adenosyl-L-methionine = 1-hexadecanoyl-2-(4Z,7Z,10Z,13Z,16Z,19Z-docosahexaenoyl)-sn-glycero-3-phospho-N-methylethanolamine + S-adenosyl-L-homocysteine + H(+). It catalyses the reaction 1-hexadecanoyl-2-(4Z,7Z,10Z,13Z,16Z,19Z-docosahexaenoyl)-sn-glycero-3-phospho-N-methylethanolamine + S-adenosyl-L-methionine = 1-hexadecanoyl-2-(4Z,7Z,10Z,13Z,16Z,19Z-docosahexaenoyl)-sn-glycero-3-phospho-N,N-dimethylethanolamine + S-adenosyl-L-homocysteine + H(+). It carries out the reaction 1-hexadecanoyl-2-(4Z,7Z,10Z,13Z,16Z,19Z-docosahexaenoyl)-sn-glycero-3-phospho-N,N-dimethylethanolamine + S-adenosyl-L-methionine = 1-hexadecanoyl-2-(4Z,7Z,10Z,13Z,16Z,19Z-docosahexaenoyl)-sn-glycero-3-phosphocholine + S-adenosyl-L-homocysteine + H(+). Its pathway is phospholipid metabolism; phosphatidylcholine biosynthesis. In terms of biological role, catalyzes the three sequential steps of the methylation pathway for the biosynthesis of phosphatidylcholine, a critical and essential component for membrane structure. Uses S-adenosylmethionine (S-adenosyl-L-methionine, SAM or AdoMet) as the methyl group donor for the methylation of phosphatidylethanolamine (1,2-diacyl-sn-glycero-3-phosphoethanolamine, PE) to phosphatidylmonomethylethanolamine (1,2-diacyl-sn-glycero-3-phospho-N-methylethanolamine, PMME), PMME to phosphatidyldimethylethanolamine (1,2-diacyl-sn-glycero-3-phospho-N,N-dimethylethanolamine, PDME), and PDME to phosphatidylcholine (1,2-diacyl-sn-glycero-3-phosphocholine, PC), producing S-adenosyl-L-homocysteine in each step. This Rattus norvegicus (Rat) protein is Phosphatidylethanolamine N-methyltransferase.